Reading from the N-terminus, the 2094-residue chain is Nuclear mitotic apparatus protein 1 (2094 aa).

The interval 1–210 (MTLHATRAAT…SPMGDILQTP (210 aa)) is head (Globular). S160 carries the post-translational modification Phosphoserine. Phosphothreonine is present on T161. Phosphoserine occurs at positions 167 and 201. T209 bears the Phosphothreonine mark. Residues 211–1681 (QFQMRRLKKQ…ADQQLRDLGK (1471 aa)) adopt a coiled-coil conformation. A Phosphoserine modification is found at S269. K377 carries the N6-acetyllysine modification. 2 positions are modified to phosphoserine: S386 and S398. K443 bears the N6-acetyllysine mark. Disordered stretches follow at residues 617 to 636 (QLQA…TQAQ) and 723 to 759 (LKEQ…AGRK). The span at 627 to 636 (NAQTSVTQAQ) shows a compositional bias: polar residues. Residue K878 is modified to N6-acetyllysine. Disordered regions lie at residues 921–1000 (SLEL…TQER), 1081–1143 (LVKK…EGLT), and 1173–1223 (ELGH…SSLI). Residues 935-951 (ASDQLGEQQGRPFSSTH) are compositionally biased toward polar residues. Composition is skewed to basic and acidic residues over residues 956–972 (AMER…ERLR) and 983–998 (QEER…RLTQ). Phosphoserine is present on S1183. The span at 1194 to 1206 (KAQDHSKAEEEWK) shows a compositional bias: basic and acidic residues. Residue S1221 is modified to Phosphoserine. K1507 carries the post-translational modification N6-acetyllysine. Phosphoserine is present on S1583. A Glycyl lysine isopeptide (Lys-Gly) (interchain with G-Cter in SUMO2) cross-link involves residue K1681. Residues 1681–1858 (KFQVATDALK…NSALLSLPGY (178 aa)) form a membrane-binding domain 1 region. The segment at 1682 to 2094 (FQVATDALKS…TPRAKGKVKH (413 aa)) is tail (Globular). A phosphoserine mark is found at S1703, S1706, and S1710. The segment at 1718-1743 (SVASKLPRTQPDGTSVPGEPASPISQ) is disordered. Positions 1724–1730 (PRTQPDG) match the Tankyrase-binding domain motif. Phosphoserine occurs at positions 1739 and 1742. A Glycyl lysine isopeptide (Lys-Gly) (interchain with G-Cter in SUMO1); alternate cross-link involves residue K1748. K1748 participates in a covalent cross-link: Glycyl lysine isopeptide (Lys-Gly) (interchain with G-Cter in SUMO2); alternate. S1751 is modified (phosphoserine). The residue at position 1754 (S1754) is a Phosphoserine; by PLK1. The residue at position 1756 (Y1756) is a Phosphotyrosine. Position 1758 is a phosphothreonine (T1758). The tract at residues 1760–1795 (TPARGQAPLETSLDSLGDAFPDSGRKTRSARRRTTQ) is disordered. The segment at 1770-1792 (TSLDSLGDAFPDSGRKTRSARRR) is 4.1-binding domain. S1771 carries the phosphoserine; by PLK1 modification. Residues S1774 and S1782 each carry the phosphoserine modification. A Phosphothreonine modification is found at T1786. K1804 is covalently cross-linked (Glycyl lysine isopeptide (Lys-Gly) (interchain with G-Cter in SUMO2)). Disordered regions lie at residues 1807 to 1883 (LEEP…GRNS) and 1937 to 2094 (EMKT…KVKH). Phosphoserine is present on residues S1812 and S1815. Positions 1812 to 1839 (SANSSFYSTQSAPASQANLRATSSTQSL) are enriched in polar residues. S1816 bears the Phosphoserine; by PLK1 mark. The residue at position 1818 (Y1818) is a Phosphotyrosine. Position 1822 is a phosphoserine (S1822). S1826 carries the phosphoserine; alternate modification. O-linked (GlcNAc) serine; alternate glycosylation occurs at S1826. S1844 and S1869 each carry phosphoserine. Positions 1864–1967 (SSARRSQARM…AEGVGITTRQ (104 aa)) are tubulin-binding domain. The segment at 1874 to 1908 (SSGAPQGRNSFYMGTCQDEPEQLDDWNRIAELQQR) is GPSM2-binding domain. Basic and acidic residues predominate over residues 1937–1948 (EMKTGDPRETLR). S1951 bears the Phosphoserine mark. The membrane-binding domain 2 stretch occupies residues 1963–2042 (ITTRQQRKRV…SILNTPKKLG (80 aa)). The short motif at 1966–1971 (RQQRKR) is the Nuclear localization signal element. Residues S1973 and S1974 each carry the phosphoserine modification. Position 1982 is a phosphothreonine (T1982). A Phosphoserine modification is found at S1985. Residue T1997 is modified to Phosphothreonine; by CDK1. Residues 1997-2006 (TPRDRHEGRK) show a composition bias toward basic and acidic residues. S2029 carries the phosphoserine modification. At T2037 the chain carries Phosphothreonine. Phosphoserine occurs at positions 2044 and 2059. A Phosphoserine; by CDK1 modification is found at S2069. The segment covering 2073-2085 (ATTTTGTATVATT) has biased composition (low complexity). The residue at position 2085 (T2085) is a Phosphothreonine; by CDK1.

In terms of assembly, homodimer. Also forms multiarm oligomers by association of C-terminal tail domains, oligomers may further assemble to form a hexagonal nuclear lattice-like network. Associates with the dynein-dynactin complex; this association promotes the transport and accumulation of NUMA1 at the mitotic spindle poles that is inhibited by the BRISC complex in a PLK1-dependent manner. Part of a spindle orientation complex at least composed of GNAI1, GPSM2 and NUMA1. Interacts (via C-terminus) with microtubules (MTs); this interaction is direct and promotes both MT bundle formation and stability in a dynein-dynactin complex- and CDK1-independent manner. Interacts with EPB41 and EPB41L2; these interactions are negatively regulated by CDK1 during metaphase and are important for anaphase-specific localization of NUMA1 in symmetrically dividing cells. Interacts (via C-terminus) with GPSM2 (via TPR repeats); this interaction is direct, prevented by competitive binding of INSC, is inhibited in a PLK1-dependent manner, blocks the association of NUMA1 with MTs and inhibits NUMA1-induced MT bundle formation, prevents the association of NUMA1 with SPAG5, induces mitotic spindle pole localization of GPSM2, both metaphase cell cortex localization of NUMA1 and mitotic spindle organization. Does not interact with GPSM2 during anaphase. Interacts (via C-terminus) with the nuclear importin alpha/importin beta receptor; this interaction is inhibited by RanGTP. Interacts (via C-terminus) with KPNB1; this interaction is inhibited by RanGTP and the BRISC complex. Interacts with ABRAXAS2 and the BRISC complex; these interactions regulate mitotic spindle assembly. Interacts (via N-terminal end of the coiled-coil domain) with RAE1; this interaction promotes mitotic spindle formation. Interacts (via C-terminus) with SPAG5 (via C-terminus); this interaction promotes the recruitment of SPAG5 to the MTs at spindle poles in a dynein-dynactin-dependent manner and regulates mitotic spindle organization and proper chromosome alignment during mitosis. Interacts with TNKS; this interaction occurs at the onset of mitosis. Interacts with TNKS2. Interacts with tubulin. Interacts with KHDC3 (via C-terminus). In terms of processing, phosphorylation and dephosphorylation on Thr-2037 regulates the extent of cortical NUMA1 and the dynein-dynactin complex localization during mitotic metaphase and anaphase. In metaphase, phosphorylation on Thr-2037 occurs in a kinase CDK1-dependent manner; this phosphorylation maintains low levels of cortical dynein-dynactin complex at metaphase, and hence proper spindle positioning. In anaphase, dephosphorylated on Thr-2037 by phosphatase PPP2CA; this dephosphorylation stimulates its membrane association and with the dynein-dynactin complex its enrichment at the cell cortex, and hence robust spindle elongation. Probably also phosphorylated on Thr-1997 and Ser-2069 by CDK1; these phosphorylations may regulate its cell cortex recruitment during metaphase and anaphase. Phosphorylated on Ser-1751, Ser-1754, Ser-1771 and Ser-1816 by PLK1; these phosphorylations induce cortical dynein-dynactin complex dissociation from the NUMA1-GPSM2 complex and negatively regulates cortical dynein-dynactin complex localization. Post-translationally, ADP-ribosylated by TNKS at the onset of mitosis; ADP-ribosylation is not required for its localization to spindle poles. O-glycosylated during cytokinesis at sites identical or close to phosphorylation sites, this interferes with the phosphorylation status. In terms of processing, ubiquitinated with 'Lys-63'-linked polyubiquitin chains. Deubiquitination by the BRISC complex is important for the incorporation of NUMA1 into mitotic spindle poles and normal spindle pole function, probably by modulating interactions between NUMA1, dynein-dynactin complex and importin-beta. As to expression, expressed in testis, speen, liver, lung, spinal cord and brain. Expressed in Purkinje neurons (at protein level).

The protein localises to the nucleus. Its subcellular location is the nucleoplasm. The protein resides in the nucleus matrix. It localises to the chromosome. It is found in the cytoplasm. The protein localises to the cytoskeleton. Its subcellular location is the microtubule organizing center. The protein resides in the centrosome. It localises to the spindle pole. It is found in the cell cortex. The protein localises to the cell membrane. Its subcellular location is the lateral cell membrane. Its function is as follows. Microtubule (MT)-binding protein that plays a role in the formation and maintenance of the spindle poles and the alignement and the segregation of chromosomes during mitotic cell division. Functions to tether the minus ends of MTs at the spindle poles, which is critical for the establishment and maintenance of the spindle poles. Plays a role in the establishment of the mitotic spindle orientation during metaphase and elongation during anaphase in a dynein-dynactin-dependent manner. In metaphase, part of a ternary complex composed of GPSM2 and G(i) alpha proteins, that regulates the recruitment and anchorage of the dynein-dynactin complex in the mitotic cell cortex regions situated above the two spindle poles, and hence regulates the correct oritentation of the mitotic spindle. During anaphase, mediates the recruitment and accumulation of the dynein-dynactin complex at the cell membrane of the polar cortical region through direct association with phosphatidylinositol 4,5-bisphosphate (PI(4,5)P2), and hence participates in the regulation of the spindle elongation and chromosome segregation. Also binds to other polyanionic phosphoinositides, such as phosphatidylinositol 3-phosphate (PIP), lysophosphatidic acid (LPA) and phosphatidylinositol triphosphate (PIP3), in vitro. Also required for proper orientation of the mitotic spindle during asymmetric cell divisions. Plays a role in mitotic MT aster assembly. Involved in anastral spindle assembly. Positively regulates TNKS protein localization to spindle poles in mitosis. Highly abundant component of the nuclear matrix where it may serve a non-mitotic structural role, occupies the majority of the nuclear volume. Required for epidermal differentiation and hair follicle morphogenesis. The sequence is that of Nuclear mitotic apparatus protein 1 from Mus musculus (Mouse).